The following is a 413-amino-acid chain: Calmodulin-binding protein CmbB (413 aa).

FNIP repeat units lie at residues 104–148 (FNHP…LSDC), 149–192 (YNQA…LGKG), 222–257 (SLPP…FGDG), 258–301 (FNQP…FHQF), 304–343 (FSQT…FSEK), and 344–386 (YNHP…LNGY).

Interacts with calmodulin in the presence of Ca(2+).

This chain is Calmodulin-binding protein CmbB, found in Dictyostelium discoideum (Social amoeba).